A 540-amino-acid chain; its full sequence is Fusion glycoprotein F0 (540 aa).

A signal peptide spans 1–18 (MIITNTIIIILIISPSFC). Residues 19-495 (QIDITKLQRV…SWYQSSATIT (477 aa)) lie on the Extracellular side of the membrane. Cys-63 and Cys-192 are disulfide-bonded. Asn-101 is a glycosylation site (N-linked (GlcNAc...) asparagine; by host). The fusion peptide stretch occupies residues 110–134 (FFGEIIGTIAIGIATSAQITAAVAL). A coiled-coil region spans residues 135-163 (VEAKQAKSDIEKLKEAIRDTNKAVQSIQS). A glycan (N-linked (GlcNAc...) asparagine; by host) is linked at Asn-238. 4 disulfides stabilise this stretch: Cys-331-Cys-340, Cys-355-Cys-363, Cys-387-Cys-392, and Cys-394-Cys-417. Asn-359 is a glycosylation site (N-linked (GlcNAc...) asparagine; by host). Asn-446 carries N-linked (GlcNAc...) asparagine; by host glycosylation. The stretch at 459-484 (ELNKAKLELEESKEWIKKSNQKLDSV) forms a coiled coil. Residues 496 to 516 (IIIVMIVVLFIINITIIVVII) form a helical membrane-spanning segment. Topologically, residues 517–540 (RHHRIQGKNQNDKNSEPYVLTSRQ) are cytoplasmic.

Belongs to the paramyxoviruses fusion glycoprotein family. As to quaternary structure, homotrimer of disulfide-linked F1-F2. Post-translationally, the inactive precursor F0 is glycosylated and proteolytically cleaved into F1 and F2 to be functionally active. The cleavage is mediated by cellular proteases during the transport and maturation of the polypeptide.

The protein resides in the virion membrane. The protein localises to the host cell membrane. Class I viral fusion protein. Under the current model, the protein has at least 3 conformational states: pre-fusion native state, pre-hairpin intermediate state, and post-fusion hairpin state. During viral and plasma cell membrane fusion, the heptad repeat (HR) regions assume a trimer-of-hairpins structure, positioning the fusion peptide in close proximity to the C-terminal region of the ectodomain. The formation of this structure appears to drive apposition and subsequent fusion of viral and plasma cell membranes. Directs fusion of viral and cellular membranes leading to delivery of the nucleocapsid into the cytoplasm. This fusion is pH independent and occurs directly at the outer cell membrane. The trimer of F1-F2 (F protein) probably interacts with HN at the virion surface. Upon HN binding to its cellular receptor, the hydrophobic fusion peptide is unmasked and interacts with the cellular membrane, inducing the fusion between cell and virion membranes. Later in infection, F proteins expressed at the plasma membrane of infected cells could mediate fusion with adjacent cells to form syncytia, a cytopathic effect that could lead to tissue necrosis. This is Fusion glycoprotein F0 (F) from Bos taurus (Bovine).